Consider the following 149-residue polypeptide: Protein TraJ (149 aa).

The protein localises to the cell membrane. This protein is essential for positively regulating the expression of transfer genes that are involved in the conjugal transfer of DNA between bacterial cells. In Escherichia coli, this protein is Protein TraJ (traJ).